Here is a 268-residue protein sequence, read N- to C-terminus: Indole-3-glycerol phosphate synthase (268 aa).

Belongs to the TrpC family.

The catalysed reaction is 1-(2-carboxyphenylamino)-1-deoxy-D-ribulose 5-phosphate + H(+) = (1S,2R)-1-C-(indol-3-yl)glycerol 3-phosphate + CO2 + H2O. It functions in the pathway amino-acid biosynthesis; L-tryptophan biosynthesis; L-tryptophan from chorismate: step 4/5. The polypeptide is Indole-3-glycerol phosphate synthase (Acinetobacter baumannii (strain ACICU)).